The primary structure comprises 780 residues: Endonuclease MutS2 (780 aa).

ATP is bound at residue 334–341 (GPNAGGKT). One can recognise a Smr domain in the interval 706–780 (IDIRGMRSVD…GGSGKTIVEI (75 aa)).

The protein belongs to the DNA mismatch repair MutS family. MutS2 subfamily. Homodimer. Binds to stalled ribosomes, contacting rRNA.

Functionally, endonuclease that is involved in the suppression of homologous recombination and thus may have a key role in the control of bacterial genetic diversity. Its function is as follows. Acts as a ribosome collision sensor, splitting the ribosome into its 2 subunits. Detects stalled/collided 70S ribosomes which it binds and splits by an ATP-hydrolysis driven conformational change. Acts upstream of the ribosome quality control system (RQC), a ribosome-associated complex that mediates the extraction of incompletely synthesized nascent chains from stalled ribosomes and their subsequent degradation. Probably generates substrates for RQC. This Borreliella burgdorferi (strain ATCC 35210 / DSM 4680 / CIP 102532 / B31) (Borrelia burgdorferi) protein is Endonuclease MutS2.